The following is a 200-amino-acid chain: MAKFTQHTGLVVPLDAANVDTDAIIPKQFLQKVTRTGFGQHLFHDWRFLDDAGQQPNPEFVLNKPHYKGASILLARENFGCGSSREHAPWALTDYGFSVVIAPSFADIFYGNSFNNQLLPVKLSDEEVDELFKLVDEQEGITFTVDLENQVVQADSKRYPFEIDSFRRHCMINGLDSIGLTLQHEASITEYEKNQPAFLN.

Belongs to the LeuD family. LeuD type 1 subfamily. Heterodimer of LeuC and LeuD.

It catalyses the reaction (2R,3S)-3-isopropylmalate = (2S)-2-isopropylmalate. It participates in amino-acid biosynthesis; L-leucine biosynthesis; L-leucine from 3-methyl-2-oxobutanoate: step 2/4. In terms of biological role, catalyzes the isomerization between 2-isopropylmalate and 3-isopropylmalate, via the formation of 2-isopropylmaleate. This Pectobacterium atrosepticum (strain SCRI 1043 / ATCC BAA-672) (Erwinia carotovora subsp. atroseptica) protein is 3-isopropylmalate dehydratase small subunit.